A 130-amino-acid polypeptide reads, in one-letter code: Small ribosomal subunit protein uS9 (130 aa).

This sequence belongs to the universal ribosomal protein uS9 family.

This Hahella chejuensis (strain KCTC 2396) protein is Small ribosomal subunit protein uS9.